The following is a 475-amino-acid chain: Cysteine--tRNA ligase (475 aa).

Cys28 lines the Zn(2+) pocket. Residues 30–40 (PTVYDYAHIGN) carry the 'HIGH' region motif. Positions 213, 238, and 242 each coordinate Zn(2+). A 'KMSKS' region motif is present at residues 270–274 (KMSKS). ATP is bound at residue Lys273.

This sequence belongs to the class-I aminoacyl-tRNA synthetase family. As to quaternary structure, monomer. It depends on Zn(2+) as a cofactor.

It is found in the cytoplasm. It catalyses the reaction tRNA(Cys) + L-cysteine + ATP = L-cysteinyl-tRNA(Cys) + AMP + diphosphate. In Chlamydia muridarum (strain MoPn / Nigg), this protein is Cysteine--tRNA ligase (cysS).